A 396-amino-acid chain; its full sequence is Peroxisome proliferator-activated receptor delta (396 aa).

The disordered stretch occupies residues 1–24 (MKEEIPPRSPILDEQPSTPLEHQE). The span at 15-24 (QPSTPLEHQE) shows a compositional bias: polar residues. A DNA-binding region (nuclear receptor) is located at residues 28–102 (SVDCKICGDR…LGMSHNAIRF (75 aa)). 2 NR C4-type zinc fingers span residues 31–51 (CKIC…CEGC) and 68–90 (CDRN…FNKC). Residues 166–394 (FVIHDMDTLW…HPLLQEIYRD (229 aa)) form the NR LBD domain.

This sequence belongs to the nuclear hormone receptor family. NR1 subfamily. As to quaternary structure, heterodimer with the retinoid X receptor. In terms of processing, 'Lys-48'-linked polyubiquitinated; leading to proteasomal degradation. Deubiquitinated and stabilized by OTUD3. Ubiquitous.

It localises to the nucleus. Its function is as follows. Ligand-activated transcription factor key mediator of energy metabolism in adipose tissues. Receptor that binds peroxisome proliferators such as hypolipidemic drugs and fatty acids. Has a preference for poly-unsaturated fatty acids, such as gamma-linoleic acid and eicosapentanoic acid. Once activated by a ligand, the receptor binds to promoter elements of target genes. Regulates the peroxisomal beta-oxidation pathway of fatty acids. Functions as a transcription activator for the acyl-CoA oxidase gene. Decreases expression of NPC1L1 once activated by a ligand. This is Peroxisome proliferator-activated receptor delta (ppard) from Xenopus laevis (African clawed frog).